A 279-amino-acid polypeptide reads, in one-letter code: Release factor glutamine methyltransferase (279 aa).

Residues Glu-141 and Asn-187 each coordinate S-adenosyl-L-methionine. 187–190 (NPPY) is a substrate binding site.

It belongs to the protein N5-glutamine methyltransferase family. PrmC subfamily.

It carries out the reaction L-glutaminyl-[peptide chain release factor] + S-adenosyl-L-methionine = N(5)-methyl-L-glutaminyl-[peptide chain release factor] + S-adenosyl-L-homocysteine + H(+). In terms of biological role, methylates the class 1 translation termination release factors RF1/PrfA and RF2/PrfB on the glutamine residue of the universally conserved GGQ motif. The sequence is that of Release factor glutamine methyltransferase from Corynebacterium glutamicum (strain ATCC 13032 / DSM 20300 / JCM 1318 / BCRC 11384 / CCUG 27702 / LMG 3730 / NBRC 12168 / NCIMB 10025 / NRRL B-2784 / 534).